The following is a 179-amino-acid chain: Ribosome maturation factor RimM (179 aa).

A PRC barrel domain is found at 98–170; sequence PDEFWDRRLR…RIVVSGIPGL (73 aa).

This sequence belongs to the RimM family. In terms of assembly, binds ribosomal protein uS19.

It is found in the cytoplasm. Functionally, an accessory protein needed during the final step in the assembly of 30S ribosomal subunit, possibly for assembly of the head region. Essential for efficient processing of 16S rRNA. May be needed both before and after RbfA during the maturation of 16S rRNA. It has affinity for free ribosomal 30S subunits but not for 70S ribosomes. This chain is Ribosome maturation factor RimM, found in Cutibacterium acnes (strain DSM 16379 / KPA171202) (Propionibacterium acnes).